The following is a 578-amino-acid chain: MALLQTSLIWVVYAIAIAVLIAVASVFIYVYQTPRDRSPSVTLTCIFAITTLLATVLLLPVDVALVSSTNSSALGRRKDWATDHEVNKILFSLKVVYYLLYSLDALLCLLVIPFTYFWYEEYDEVAAEEGEQTTGNRFWAAFKYTITFIAIVIVLFLVGFFVPVAKDNHSGGLDYFKKLLTENRGERALTFALGLLITIGLCLYVLYTSTGLALLPVSLIKTAPSISAPNLKATTAMQLDSNRERQRQLEGRCGGNTELLSSKDRRELDMLVREERTLIRRQRLADEAQGEGRSWLMRAWLKTEAVFRPFKLLGGIILLIIALVIWVSMLLTAIDKATNSFCKYHCGYILGHITVFNPINWVFVQAAKVFPVDYVIFTLLVLLFFCSSVVGIAIVGIRFLWIRIFQIRKGHTSPQALLLTTAMLMLTILALNYSVSMVVAPQYATFGPQTFCDRTTGTFGEQADCSNARHLIKPCSEMIKNPAASGVCTPSIASTFLNRVTINFPFFGVIFFWGQFVFLGVYLIVVVASLFRSPKLDERQMDEDAEEAEEEGLLASTGRRLDTAWQDITGRSNRQRDS.

2 helical membrane passes run Leu-8–Ile-28 and Ile-46–Val-66. An N-linked (GlcNAc...) asparagine glycan is attached at Asn-70. 2 consecutive transmembrane segments (helical) span residues Val-95–Thr-115 and Thr-145–Ala-165. Asn-168 is a glycosylation site (N-linked (GlcNAc...) asparagine). Transmembrane regions (helical) follow at residues Ala-188–Thr-208, Leu-312–Thr-332, Gly-347–Ala-367, Val-375–Val-395, Leu-419–Val-439, and Phe-506–Val-526. Residues Arg-539–Ser-578 form a disordered region. Over residues Gln-540–Gly-552 the composition is skewed to acidic residues.

This sequence belongs to the LIMR family. LMBRD1 subfamily.

The protein localises to the lysosome membrane. Functionally, probable lysosomal cobalamin transporter. Required to export cobalamin from lysosomes allowing its conversion to cofactors. This chain is Probable lysosomal cobalamin transporter, found in Aspergillus terreus (strain NIH 2624 / FGSC A1156).